The sequence spans 504 residues: Putative BTB/POZ domain-containing protein R842 (504 aa).

The BTB domain maps to 21–91 (SDVKLILKDN…FYGFKSPSVT (71 aa)).

It belongs to the mimivirus BTB/WD family.

In Acanthamoeba polyphaga (Amoeba), this protein is Putative BTB/POZ domain-containing protein R842.